The primary structure comprises 361 residues: Histidinol-phosphate aminotransferase (361 aa).

The residue at position 219 (K219) is an N6-(pyridoxal phosphate)lysine.

It belongs to the class-II pyridoxal-phosphate-dependent aminotransferase family. Histidinol-phosphate aminotransferase subfamily. As to quaternary structure, homodimer. It depends on pyridoxal 5'-phosphate as a cofactor.

It carries out the reaction L-histidinol phosphate + 2-oxoglutarate = 3-(imidazol-4-yl)-2-oxopropyl phosphate + L-glutamate. It functions in the pathway amino-acid biosynthesis; L-histidine biosynthesis; L-histidine from 5-phospho-alpha-D-ribose 1-diphosphate: step 7/9. The protein is Histidinol-phosphate aminotransferase of Acinetobacter baylyi (strain ATCC 33305 / BD413 / ADP1).